Consider the following 295-residue polypeptide: Protease HtpX homolog (295 aa).

Transmembrane regions (helical) follow at residues 15–35 and 39–59; these read LVMA…GYAF and AQTG…VILG. H143 is a Zn(2+) binding site. E144 is an active-site residue. H147 is a Zn(2+) binding site. 2 consecutive transmembrane segments (helical) span residues 159 to 179 and 195 to 215; these read ALAL…AMWW and VIML…ASMA. E224 lines the Zn(2+) pocket.

Belongs to the peptidase M48B family. It depends on Zn(2+) as a cofactor.

It is found in the cell membrane. The sequence is that of Protease HtpX homolog from Ligilactobacillus salivarius (strain UCC118) (Lactobacillus salivarius).